We begin with the raw amino-acid sequence, 389 residues long: MEKKNITLTILLTNLFIAFLGIGLVIPVTPTIMNELHLSGTAVGYMVACFAITQLIVSPIAGRWVDRFGRKIMIVIGLLFFSVSEFLFGIGKTVEMLFISRMLGGISAAFIMPGVTAFIADITTIKTRPKALGYMSAAISTGFIIGPGIGGFLAEVHSRLPFFFAAAFALLAAILSILTLREPERNPENQEIKGQKTGFKRIFAPMYFIAFLIILISSFGLASFESLFALFVDHKFGFTASDIAIMITGGAIVGAITQVVLFDRFTRWFGEIHLIRYSLILSTSLVFLLTTVHSYVAILLVTVTVFVGFDLMRPAVTTYLSKIAGNEQGFAGGMNSMFTSIGNVFGPIIGGMLFDIDVNYPFYFATVTLAIGIALTIAWKAPAHLKAST.

A run of 11 helical transmembrane segments spans residues I6 to I26, A42 to G62, K71 to G91, M102 to I122, Y134 to A154, L160 to L180, I202 to A222, I243 to D263, V286 to F306, S336 to I356, and V358 to A378.

The protein belongs to the major facilitator superfamily. TCR/Tet family.

Its subcellular location is the cell membrane. Its function is as follows. Energy-dependent efflux pump responsible for decreased drug accumulation in multi-drug-resistant cells. Probably uses a transmembrane proton gradient as the energy source. Causes the efflux of a variety of toxic substances, including such structurally diverse compounds as ethidium bromide, rhodamine and acridine dyes, tetraphenylphosphonium, puromycin, chloramphenicol, doxorubicin, and fluoroquinolone antibiotics. The polypeptide is Multidrug resistance protein 1 (bmr) (Bacillus subtilis (strain 168)).